We begin with the raw amino-acid sequence, 124 residues long: Fluoride-specific ion channel FluC (124 aa).

A run of 4 helical transmembrane segments spans residues 5-25, 37-57, 69-89, and 99-119; these read ILAVSIAGIAGTLLRFAAGTW, ATLAVNIVGCLIIGVLYGLFL, GLIVGFVGGLTTFSSFSLDTL, and LALGYAGISVFGGLLATWAGL. The Na(+) site is built by G76 and T79.

Belongs to the fluoride channel Fluc/FEX (TC 1.A.43) family.

The protein localises to the cell inner membrane. The enzyme catalyses fluoride(in) = fluoride(out). Na(+) is not transported, but it plays an essential structural role and its presence is essential for fluoride channel function. Functionally, fluoride-specific ion channel. Important for reducing fluoride concentration in the cell, thus reducing its toxicity. This is Fluoride-specific ion channel FluC from Pseudomonas syringae pv. tomato (strain ATCC BAA-871 / DC3000).